The sequence spans 125 residues: Fluoride-specific ion channel FluC (125 aa).

4 helical membrane-spanning segments follow: residues 7 to 27 (FFIVGAGGFVGSVMRYLMAVV), 36 to 56 (GFPYATLAVNVLGSFMIGFLS), 63 to 83 (PYGRLFVMVGVLGGFTTFSTF), and 96 to 116 (FIFASLNVLLNVLLCLVGVFC). Gly75 and Thr78 together coordinate Na(+).

The protein belongs to the fluoride channel Fluc/FEX (TC 1.A.43) family.

It localises to the cell inner membrane. It carries out the reaction fluoride(in) = fluoride(out). Its activity is regulated as follows. Na(+) is not transported, but it plays an essential structural role and its presence is essential for fluoride channel function. In terms of biological role, fluoride-specific ion channel. Important for reducing fluoride concentration in the cell, thus reducing its toxicity. This chain is Fluoride-specific ion channel FluC, found in Elusimicrobium minutum (strain Pei191).